A 706-amino-acid chain; its full sequence is Cyclic nucleotide-gated channel alpha-3 (706 aa).

The Cytoplasmic portion of the chain corresponds to 1–189 (MAKISTQYSH…MDPSSNMYYH (189 aa)). Residues 113 to 177 (RESHVQFNVG…PKKEEKKKDS (65 aa)) are disordered. The span at 147–177 (SEKDDKAKKEEKEKKEEKKENPKKEEKKKDS) shows a compositional bias: basic and acidic residues. A helical membrane pass occupies residues 190 to 211 (WLTVIAVPVFYNWCLLVCRACF). At 212 to 217 (DELQSE) the chain is on the extracellular side. A helical transmembrane segment spans residues 218-238 (HLMLWLVLDYSADILYGMDML). Over 239–265 (VRARTGFLEQGLMVMDASRLWKHYTQT) the chain is Cytoplasmic. Residues 266 to 285 (LHFKLDVLSLVPTDLAYFKL) traverse the membrane as a helical segment. Topologically, residues 286–289 (GMNY) are extracellular. Residues 290-307 (PELRFNRLLKLARLFEFF) form a helical membrane-spanning segment. The Cytoplasmic segment spans residues 308–317 (DRTETRTNYP). Positions 317–425 (PNMFRIGNLV…GNVGSMISNM (109 aa)) are ion conduction pathway. A helical membrane pass occupies residues 318–340 (NMFRIGNLVLYILIIIHWNACIY). Topologically, residues 341–366 (FAISKFIGFGTDSWVYPNVSNPEYGR) are extracellular. Asn358 carries N-linked (GalNAc...) asparagine glycosylation. The next 2 membrane-spanning stretches (helical) occupy residues 367 to 397 (LSRK…DEEY) and 398 to 422 (LFVV…GSMI). Residues 384 to 387 (TIGE) are selectivity filter. Residues 423–706 (SNMNASRAEF…DAPQTEASQP (284 aa)) lie on the Cytoplasmic side of the membrane. Residues 427–504 (ASRAEFQAKI…TLRKVRIFQD (78 aa)) form a C-linker region. Residues 507-627 (AGLLVELVLK…EEKGRQILMK (121 aa)) are cyclic nucleotide-binding domain. 3',5'-cyclic GMP is bound by residues Gly567, Glu568, Ser570, Arg583, Thr584, and Asp628. A coiled-coil region spans residues 645-688 (IEEKVEHLETSLDSLQTRFARLLAEYNATQMKVKQRLSQLESQV). The interval 685 to 706 (ESQVKMGLPPDGDAPQTEASQP) is disordered.

Belongs to the cyclic nucleotide-gated cation channel (TC 1.A.1.5) family. CNGA3 subfamily. In terms of assembly, forms heterotetrameric channels composed of CNGA3 and CNGB3 subunits with 3:1 stoichiometry. In terms of tissue distribution, testis, kidney, retinal cone (at protein level) and heart.

The protein localises to the cell membrane. The catalysed reaction is Ca(2+)(in) = Ca(2+)(out). It catalyses the reaction Na(+)(in) = Na(+)(out). It carries out the reaction K(+)(in) = K(+)(out). The enzyme catalyses NH4(+)(in) = NH4(+)(out). The catalysed reaction is Rb(+)(in) = Rb(+)(out). It catalyses the reaction Li(+)(in) = Li(+)(out). It carries out the reaction Cs(+)(in) = Cs(+)(out). Ca(2+) influx is inhibited by extracellular Mg(2+) ions. In terms of biological role, pore-forming subunit of the cone cyclic nucleotide-gated channel. Mediates cone photoresponses at bright light converting transient changes in intracellular cGMP levels into electrical signals. In the dark, cGMP levels are high and keep the channel open enabling a steady inward current carried by Na(+) and Ca(2+) ions that leads to membrane depolarization and neurotransmitter release from synaptic terminals. Upon photon absorption cGMP levels decline leading to channel closure and membrane hyperpolarization that ultimately slows neurotransmitter release and signals the presence of light, the end point of the phototransduction cascade. Pore-forming subunit of the gustatory cyclic nucleotide-gated channel. In the taste buds, may sense oral extracellular pH and conduct ion currents that modulate the excitability of taste cells. Conducts cGMP- and cAMP-gated ion currents, with permeability for monovalent and divalent cations. In Bos taurus (Bovine), this protein is Cyclic nucleotide-gated channel alpha-3.